Consider the following 1212-residue polypeptide: Probable serine/threonine-protein kinase DDB_G0284491 (1212 aa).

Residues 197-217 (LFHSFSLLNLYVYLIIVIRII) form a helical membrane-spanning segment. 14 N-linked (GlcNAc...) asparagine glycosylation sites follow: Asn-229, Asn-299, Asn-309, Asn-328, Asn-335, Asn-341, Asn-344, Asn-391, Asn-419, Asn-422, Asn-426, Asn-427, Asn-435, and Asn-499. Residues 288–329 (LNNNNDNNLNNNNSNNNLNNNNNSNSNFNNDNNLNSNINSND) are disordered. Disordered stretches follow at residues 412 to 439 (GNSN…NSGG) and 489 to 517 (IIKN…DYEE). Low complexity predominate over residues 489–507 (IIKNNNNNNNNNSNNNNNN). Over residues 508–517 (NDEDDSDYEE) the composition is skewed to acidic residues. A helical membrane pass occupies residues 673 to 693 (IQIFDDYSLIIALRLLMNFIL). The span at 703–720 (VPPPPTQPSSRPQSPPTV) shows a compositional bias: pro residues. Disordered stretches follow at residues 703–733 (VPPP…HHSG) and 751–813 (EVVS…NNNN). The region spanning 865-1182 (ETEIEPFASG…EVYNDLQDIY (318 aa)) is the Protein kinase domain. Residues 871 to 879 (FASGGQANI) and Lys-924 contribute to the ATP site. Asp-1035 serves as the catalytic Proton acceptor.

It belongs to the protein kinase superfamily. Ser/Thr protein kinase family.

It localises to the membrane. It catalyses the reaction L-seryl-[protein] + ATP = O-phospho-L-seryl-[protein] + ADP + H(+). The enzyme catalyses L-threonyl-[protein] + ATP = O-phospho-L-threonyl-[protein] + ADP + H(+). In Dictyostelium discoideum (Social amoeba), this protein is Probable serine/threonine-protein kinase DDB_G0284491.